The chain runs to 167 residues: SsrA-binding protein (167 aa).

Residues 139–167 (QAHDKRHAEKEREWQRDKQRIMRAHNRNA) form a disordered region. Residues 144-158 (RHAEKEREWQRDKQR) are compositionally biased toward basic and acidic residues.

This sequence belongs to the SmpB family.

It is found in the cytoplasm. Functionally, required for rescue of stalled ribosomes mediated by trans-translation. Binds to transfer-messenger RNA (tmRNA), required for stable association of tmRNA with ribosomes. tmRNA and SmpB together mimic tRNA shape, replacing the anticodon stem-loop with SmpB. tmRNA is encoded by the ssrA gene; the 2 termini fold to resemble tRNA(Ala) and it encodes a 'tag peptide', a short internal open reading frame. During trans-translation Ala-aminoacylated tmRNA acts like a tRNA, entering the A-site of stalled ribosomes, displacing the stalled mRNA. The ribosome then switches to translate the ORF on the tmRNA; the nascent peptide is terminated with the 'tag peptide' encoded by the tmRNA and targeted for degradation. The ribosome is freed to recommence translation, which seems to be the essential function of trans-translation. The chain is SsrA-binding protein from Xylella fastidiosa (strain 9a5c).